The primary structure comprises 374 residues: Glycerophosphodiester phosphodiesterase GDPD2 (374 aa).

The GP-PDE domain maps to Phe38–Thr326. The interval Met330–Val349 is disordered. A compositionally biased stretch (pro residues) spans Arg332–Ser342.

This sequence belongs to the glycerophosphoryl diester phosphodiesterase family. Expressed in roots, shoots, flowers and siliques.

The catalysed reaction is a sn-glycero-3-phosphodiester + H2O = an alcohol + sn-glycerol 3-phosphate + H(+). This Arabidopsis thaliana (Mouse-ear cress) protein is Glycerophosphodiester phosphodiesterase GDPD2.